A 252-amino-acid chain; its full sequence is Transcription factor bHLH117 (252 aa).

Residues 103 to 141 are disordered; sequence LFPSLSPPLPAAKRQKLNSTSSSTTSGSPTASNDGGIIT. Residues 121 to 134 show a composition bias toward low complexity; it reads STSSSTTSGSPTAS. The bHLH domain maps to 130–179; that stretch reads SPTASNDGGIITKRRKISDKIRSLEKLMPWERKMNLAMTLEESHKYIKFL.

As to quaternary structure, homodimer.

It localises to the nucleus. The protein is Transcription factor bHLH117 (BHLH117) of Arabidopsis thaliana (Mouse-ear cress).